A 362-amino-acid chain; its full sequence is UDP-N-acetylglucosamine--N-acetylmuramyl-(pentapeptide) pyrophosphoryl-undecaprenol N-acetylglucosamine transferase (362 aa).

UDP-N-acetyl-alpha-D-glucosamine contacts are provided by residues 15–17 (TGG), Asn-127, Arg-165, Ser-191, Ile-247, 266–271 (ALTVSE), and Gln-292.

It belongs to the glycosyltransferase 28 family. MurG subfamily.

The protein localises to the cell inner membrane. The enzyme catalyses di-trans,octa-cis-undecaprenyl diphospho-N-acetyl-alpha-D-muramoyl-L-alanyl-D-glutamyl-meso-2,6-diaminopimeloyl-D-alanyl-D-alanine + UDP-N-acetyl-alpha-D-glucosamine = di-trans,octa-cis-undecaprenyl diphospho-[N-acetyl-alpha-D-glucosaminyl-(1-&gt;4)]-N-acetyl-alpha-D-muramoyl-L-alanyl-D-glutamyl-meso-2,6-diaminopimeloyl-D-alanyl-D-alanine + UDP + H(+). Its pathway is cell wall biogenesis; peptidoglycan biosynthesis. In terms of biological role, cell wall formation. Catalyzes the transfer of a GlcNAc subunit on undecaprenyl-pyrophosphoryl-MurNAc-pentapeptide (lipid intermediate I) to form undecaprenyl-pyrophosphoryl-MurNAc-(pentapeptide)GlcNAc (lipid intermediate II). The sequence is that of UDP-N-acetylglucosamine--N-acetylmuramyl-(pentapeptide) pyrophosphoryl-undecaprenol N-acetylglucosamine transferase from Shewanella sp. (strain MR-4).